A 255-amino-acid chain; its full sequence is Zinc import ATP-binding protein ZnuC (255 aa).

Residues 5-220 (VALEHIAVAF…PDFIAMFGYR (216 aa)) form the ABC transporter domain.

This sequence belongs to the ABC transporter superfamily. Zinc importer (TC 3.A.1.15.5) family. In terms of assembly, the complex is composed of two ATP-binding proteins (ZnuC), two transmembrane proteins (ZnuB) and a solute-binding protein (ZnuA).

The protein localises to the cell inner membrane. It catalyses the reaction Zn(2+)(out) + ATP(in) + H2O(in) = Zn(2+)(in) + ADP(in) + phosphate(in) + H(+)(in). Functionally, part of the ABC transporter complex ZnuABC involved in zinc import. Responsible for energy coupling to the transport system. The polypeptide is Zinc import ATP-binding protein ZnuC (Sodalis glossinidius (strain morsitans)).